A 284-amino-acid polypeptide reads, in one-letter code: 2-dehydro-3-deoxyphosphooctonate aldolase (284 aa).

Belongs to the KdsA family.

It is found in the cytoplasm. The enzyme catalyses D-arabinose 5-phosphate + phosphoenolpyruvate + H2O = 3-deoxy-alpha-D-manno-2-octulosonate-8-phosphate + phosphate. Its pathway is carbohydrate biosynthesis; 3-deoxy-D-manno-octulosonate biosynthesis; 3-deoxy-D-manno-octulosonate from D-ribulose 5-phosphate: step 2/3. It participates in bacterial outer membrane biogenesis; lipopolysaccharide biosynthesis. The sequence is that of 2-dehydro-3-deoxyphosphooctonate aldolase from Histophilus somni (strain 129Pt) (Haemophilus somnus).